Here is an 870-residue protein sequence, read N- to C-terminus: Importin subunit beta-1 (870 aa).

N-acetylalanine is present on Ala-2. 18 HEAT repeats span residues 4–33 (EVTQLLINAQSIDGTVRKHAEESLKQFQEQ), 35–67 (LAGFLLSLAGELANDEKPVDSRKLAGLVLKNAL), 87–126 (MSTKSQIRAFLLKTLSAPVPDVRSTASQVIAKVAGIELPQ), 132–161 (LIVSLLSNIHQLPAHVKQATLETLGYLCEE), 172–204 (VNKILTAVVQGMNAAEGNTDVRLAATRALYMAL), 214–249 (DMERDYIMRVVCEATLSPEVKIRQAAFECLVSIAST), 255–304 (AHYM…EFAG), 313–361 (FTKQ…RAVG), 365–395 (VPHVMPFIEEKISKPDWREREAATYAFGSIL), 403–440 (LMAIVNAALTFMLNALTNDPSNHVKDTTAWTLGRIFEF), 456–492 (CQQIITVLIQSMNDAPNVAEKACGALYFLAQGYEDIG), 498–535 (TPFFQEIIKSLLAVAHREDATESRLRTAAYEALNEVVR), 542–588 (STMV…QVII), 596–637 (TKSK…AYAA), 642–679 (AKYMPEFYKYLEMGLQNFEEYQVCAVTVGVVGDVCRAL), 684–722 (LPYCDGIMTQLLKDLSSNQLHRSVKPPIFSCFGDIALAI), 730–776 (WRYS…FQGF), and 826–868 (SHVG…TRAI). The Importin N-terminal domain occupies 23-103 (AEESLKQFQE…RAFLLKTLSA (81 aa)).

It belongs to the importin beta family. Importin beta-1 subfamily. Forms a complex with the importin subunits alpha IMPA1 or IMPA2, the nucleoporin NUP62 and the Ran-GTP-binding proteins RAN1, RAN2 or RAN3. In terms of tissue distribution, expressed in roots, cotyledons, leaves, stems, petals, stamen, stigma, siliques, embryos and guard cells.

The protein resides in the cytoplasm. Its subcellular location is the nucleus. Functionally, acts as a negative effector of drought tolerance. Involved in the regulation of stomatal closure and in the abscisic acid (ABA)-mediated pathway that lead to drought tolerance. Does not directly mediate nuclear import of ABI1 and ABI2 which are key regulators of the ABA signaling pathway. May be involved in nuclear translocation of other type 2C protein phosphatases that mediate ABA signaling. The polypeptide is Importin subunit beta-1 (Arabidopsis thaliana (Mouse-ear cress)).